We begin with the raw amino-acid sequence, 94 residues long: Putative regulatory protein THA_332 (94 aa).

It belongs to the RemA family.

The chain is Putative regulatory protein THA_332 from Thermosipho africanus (strain TCF52B).